The following is a 575-amino-acid chain: Kelch repeat and BTB domain-containing protein 8 (575 aa).

The 69-residue stretch at 23-91 (TDIVVEVDHG…AYTSRVILTE (69 aa)) folds into the BTB domain. One can recognise a BACK domain in the interval 126 to 228 (SIGVFIFADH…MEDAFIEKIP (103 aa)). Kelch repeat units lie at residues 310-364 (DIYI…YCCG), 365-415 (KMYA…EHKE), 417-455 (IYVL…VYKD), 457-506 (IYYI…LFQN), and 516-562 (QVTV…FECA).

This sequence belongs to the KBTBD8 family. Component of the BCR(KBTBD8) E3 ubiquitin ligase complex, at least composed of CUL3, KBTBD8 and RBX1.

Its subcellular location is the cytoplasm. The protein resides in the cytoskeleton. It is found in the spindle. It localises to the golgi apparatus. Its function is as follows. Substrate-specific adapter of a BCR (BTB-CUL3-RBX1) E3 ubiquitin ligase complex that acts as a regulator of neural crest specification. The BCR(KBTBD8) complex acts by mediating monoubiquitination of NOLC1 and TCOF1: monoubiquitination promotes the formation of a NOLC1-TCOF1 complex that acts as a platform to connect RNA polymerase I with enzymes responsible for ribosomal processing and modification, leading to remodel the translational program of differentiating cells in favor of neural crest specification. This chain is Kelch repeat and BTB domain-containing protein 8, found in Rattus norvegicus (Rat).